The primary structure comprises 221 residues: Probable glutathione S-transferase (221 aa).

Residues 4 to 83 form the GST N-terminal domain; sequence EEVILLDFWP…YIEEVWKDKA (80 aa). Glutathione contacts are provided by residues S14, K41, I55, and 67–68; that span reads ES. In terms of domain architecture, GST C-terminal spans 90-214; sequence DPYDRAQARF…PKVLEFVKVL (125 aa).

Belongs to the GST superfamily. HSP26 family. As to expression, root tip-specific expression.

It catalyses the reaction RX + glutathione = an S-substituted glutathione + a halide anion + H(+). The polypeptide is Probable glutathione S-transferase (Nicotiana tabacum (Common tobacco)).